Reading from the N-terminus, the 205-residue chain is Small ribosomal subunit protein uS4 (205 aa).

Residues 26 to 46 form a disordered region; it reads PVNRREYGPGQHGQRRKQKPS. An S4 RNA-binding domain is found at 94-157; that stretch reads RRLDAVVYRL…KQLAIVLDAV (64 aa).

This sequence belongs to the universal ribosomal protein uS4 family. Part of the 30S ribosomal subunit. Contacts protein S5. The interaction surface between S4 and S5 is involved in control of translational fidelity.

Its function is as follows. One of the primary rRNA binding proteins, it binds directly to 16S rRNA where it nucleates assembly of the body of the 30S subunit. Functionally, with S5 and S12 plays an important role in translational accuracy. The sequence is that of Small ribosomal subunit protein uS4 from Gluconobacter oxydans (strain 621H) (Gluconobacter suboxydans).